The sequence spans 185 residues: Probable nicotinate-nucleotide adenylyltransferase (185 aa).

It belongs to the NadD family.

The catalysed reaction is nicotinate beta-D-ribonucleotide + ATP + H(+) = deamido-NAD(+) + diphosphate. It functions in the pathway cofactor biosynthesis; NAD(+) biosynthesis; deamido-NAD(+) from nicotinate D-ribonucleotide: step 1/1. Catalyzes the reversible adenylation of nicotinate mononucleotide (NaMN) to nicotinic acid adenine dinucleotide (NaAD). This chain is Probable nicotinate-nucleotide adenylyltransferase, found in Methylorubrum extorquens (strain PA1) (Methylobacterium extorquens).